Consider the following 85-residue polypeptide: Large ribosomal subunit protein bL27 (85 aa).

The segment at 1–24 (MAHKKGQGSSRNGRDSNAQRRGVK) is disordered.

It belongs to the bacterial ribosomal protein bL27 family.

This is Large ribosomal subunit protein bL27 from Syntrophus aciditrophicus (strain SB).